Here is a 186-residue protein sequence, read N- to C-terminus: Ribosomal RNA small subunit methyltransferase G (186 aa).

S-adenosyl-L-methionine is bound by residues glycine 59, phenylalanine 64, 110-111, and arginine 124; that span reads IE.

This sequence belongs to the methyltransferase superfamily. RNA methyltransferase RsmG family.

Its subcellular location is the cytoplasm. It catalyses the reaction guanosine(527) in 16S rRNA + S-adenosyl-L-methionine = N(7)-methylguanosine(527) in 16S rRNA + S-adenosyl-L-homocysteine. Functionally, specifically methylates the N7 position of guanine in position 527 of 16S rRNA. The chain is Ribosomal RNA small subunit methyltransferase G from Campylobacter curvus (strain 525.92).